The primary structure comprises 366 residues: PTI1-like tyrosine-protein kinase 2 (366 aa).

The segment covering 8–23 has biased composition (basic and acidic residues); that stretch reads GDKKGDSDLSNEEVHL. The interval 8-50 is disordered; sequence GDKKGDSDLSNEEVHLKSPWQNSEANQKNQKPQAVVKPEAQKE. Residues 26–39 show a composition bias toward polar residues; that stretch reads PWQNSEANQKNQKP. One can recognise a Protein kinase domain in the interval 71–353; sequence FGSKSLIGEG…IVVKALQPLL (283 aa). ATP contacts are provided by residues 77–85 and Lys99; that span reads IGEGSYGRV. The active-site Proton acceptor is Asp203.

It belongs to the protein kinase superfamily. Tyr protein kinase family. As to quaternary structure, interacts with OXI1. Autophosphorylated and phosphorylated by OXI1.

It carries out the reaction L-tyrosyl-[protein] + ATP = O-phospho-L-tyrosyl-[protein] + ADP + H(+). Strongly activated in response to phosphatidic acid (PA) and xylanase in a OXI1- and PDK1-dependent manner, and, to a lesser extent, by hydrogen peroxide and flagellin in a OXI1-dependent manner. Functionally, probable tyrosine-protein kinase involved in oxidative burst-mediated signaling leading to specific genes expression. The sequence is that of PTI1-like tyrosine-protein kinase 2 (PTI12) from Arabidopsis thaliana (Mouse-ear cress).